The chain runs to 107 residues: Replication initiation control protein YabA (107 aa).

Residues His-80, Cys-82, Cys-97, and Cys-100 each contribute to the Zn(2+) site.

It belongs to the YabA family. In terms of assembly, homotetramer. Interacts with both DnaA and DnaN, acting as a bridge between these two proteins. Requires Zn(2+) as cofactor.

Its subcellular location is the cytoplasm. The protein localises to the nucleoid. Functionally, involved in control of chromosome replication initiation. Inhibits the cooperative binding of DnaA to the oriC region, thus negatively regulating initiation of chromosome replication. Inhibits the ability of DnaA-ATP to form a helix on DNA; does not disassemble preformed DnaA-DNA helices. Decreases the residence time of DnaA on the chromosome at its binding sites (oriC, replication forks and promoter-binding sites). Tethers DnaA to the replication machinery via the DNA polymerase beta sliding clamp subunit (dnaN). Associates with oriC and other DnaA targets on the chromosome in a DnaA-dependent manner. The polypeptide is Replication initiation control protein YabA (Streptococcus gordonii (strain Challis / ATCC 35105 / BCRC 15272 / CH1 / DL1 / V288)).